A 127-amino-acid chain; its full sequence is Holo-[acyl-carrier-protein] synthase (127 aa).

Residues Asp9 and Glu58 each coordinate Mg(2+).

It belongs to the P-Pant transferase superfamily. AcpS family. The cofactor is Mg(2+).

The protein localises to the cytoplasm. It carries out the reaction apo-[ACP] + CoA = holo-[ACP] + adenosine 3',5'-bisphosphate + H(+). Its function is as follows. Transfers the 4'-phosphopantetheine moiety from coenzyme A to a Ser of acyl-carrier-protein. The chain is Holo-[acyl-carrier-protein] synthase from Shewanella baltica (strain OS195).